A 1131-amino-acid polypeptide reads, in one-letter code: PolyA-specific ribonuclease subunit panl-2 (1131 aa).

Positions 489 to 864 (VTMQSTHGMN…LPALLAYKKK (376 aa)) constitute a USP domain. The region spanning 909-1074 (VGLDAEFIKI…VDARYALKLY (166 aa)) is the Exonuclease domain. A compositionally biased stretch (polar residues) spans 1104-1115 (QTSSPLVVSTTR). The tract at residues 1104 to 1131 (QTSSPLVVSTTRKTPEDTNPADAAPKSV) is disordered.

The polypeptide is PolyA-specific ribonuclease subunit panl-2 (Caenorhabditis elegans).